A 322-amino-acid polypeptide reads, in one-letter code: MREIDVAVIGAGPSGLFAAYYAGFRGLSVAVVDALPEPGGQVTAMYPEKLIHDVAGFPAIRGRDLIANLVAQAAPFDPRYLLGTRAEKLTYVDGRPVLGLAGGEQLACGAVVITGGLGSFTPRPLPVAERFLGTGIVYFVPQPADLTNRDVLIVGGGDSAFDWASTLQPLARSVTLVHRRERFRAHAATVARVRALPVRIVVNAEVTRLHGGGTVTGAEITVRGGAAELLPVDTVVAALGFTADLGPLTEWGLRLDRRHIVVDSTMATNLPRVFAAGDITEYPGKVRLIATGFGEAATAVNNAAVVIDPAAHLFPGHSSDGS.

Residues serine 14, aspartate 33, glutamine 41, tyrosine 46, alanine 86, phenylalanine 120, aspartate 278, and serine 319 each contribute to the FAD site.

The protein belongs to the ferredoxin--NADP reductase type 2 family. In terms of assembly, homodimer. The cofactor is FAD.

It catalyses the reaction 2 reduced [2Fe-2S]-[ferredoxin] + NADP(+) + H(+) = 2 oxidized [2Fe-2S]-[ferredoxin] + NADPH. This Salinispora arenicola (strain CNS-205) protein is Ferredoxin--NADP reductase.